The sequence spans 86 residues: MVSVARLVFMLGPLLCLGAQLSSSQHWSHGWYPGGKRELDSFTTSEISEGIKLCEAEGCSYLRPQRRNILKNVILDALAREFQKRK.

An N-terminal signal peptide occupies residues 1 to 24 (MVSVARLVFMLGPLLCLGAQLSSS). Position 25 is a pyrrolidone carboxylic acid (Gln25). Position 34 is a glycine amide (Gly34).

The protein belongs to the GnRH family.

The protein resides in the secreted. Functionally, stimulates the secretion of gonadotropins. The polypeptide is Progonadoliberin-2 (gnrh2) (Oncorhynchus mykiss (Rainbow trout)).